A 215-amino-acid polypeptide reads, in one-letter code: MADS-box transcription factor 4 (215 aa).

An MADS-box domain is found at 1-61; it reads MGRGKIEIKR…GKLSDYCTPK (61 aa). The K-box domain maps to 89–175; it reads HKSLSAEIDR…AFRVHQQEVE (87 aa).

As to quaternary structure, may interact with the K-box of MADS16. In terms of tissue distribution, highly expressed in lodicules, at intermediate levels in stamens, and weakly in carpels. Expressed in pollen.

It localises to the nucleus. Its function is as follows. Probable transcription factor involved in the development of floral organs. B-class protein required for normal development of lodicules and stamens (whorls 2 and 3). May function as a heterodimer with MADS16. This Oryza sativa subsp. japonica (Rice) protein is MADS-box transcription factor 4 (MADS4).